A 289-amino-acid chain; its full sequence is Acetyl-coenzyme A carboxylase carboxyl transferase subunit beta (289 aa).

The CoA carboxyltransferase N-terminal domain occupies 28 to 289 (VMTKCPKCKK…QGGEMAVWQS (262 aa)). Positions 32, 35, 51, and 54 each coordinate Zn(2+). The segment at 32 to 54 (CPKCKKIMYTKEVLKNLKVCVNC) adopts a C4-type zinc-finger fold.

It belongs to the AccD/PCCB family. In terms of assembly, acetyl-CoA carboxylase is a heterohexamer composed of biotin carboxyl carrier protein (AccB), biotin carboxylase (AccC) and two subunits each of ACCase subunit alpha (AccA) and ACCase subunit beta (AccD). Zn(2+) is required as a cofactor.

The protein resides in the cytoplasm. The enzyme catalyses N(6)-carboxybiotinyl-L-lysyl-[protein] + acetyl-CoA = N(6)-biotinyl-L-lysyl-[protein] + malonyl-CoA. Its pathway is lipid metabolism; malonyl-CoA biosynthesis; malonyl-CoA from acetyl-CoA: step 1/1. Its function is as follows. Component of the acetyl coenzyme A carboxylase (ACC) complex. Biotin carboxylase (BC) catalyzes the carboxylation of biotin on its carrier protein (BCCP) and then the CO(2) group is transferred by the transcarboxylase to acetyl-CoA to form malonyl-CoA. The protein is Acetyl-coenzyme A carboxylase carboxyl transferase subunit beta of Bacillus cereus (strain ZK / E33L).